The chain runs to 141 residues: Hemoglobin subunit alpha (141 aa).

A Globin domain is found at 1-141; that stretch reads VLSGEDKNNI…VSTVLTSKYR (141 aa). Phosphoserine is present on serine 3. 2 positions are modified to N6-succinyllysine: lysine 7 and lysine 11. Lysine 16 is subject to N6-acetyllysine; alternate. Lysine 16 is subject to N6-succinyllysine; alternate. Residue tyrosine 24 is modified to Phosphotyrosine. Lysine 40 carries the post-translational modification N6-succinyllysine. Phosphoserine is present on serine 49. Histidine 58 lines the O2 pocket. Histidine 87 is a binding site for heme b. Phosphoserine is present on serine 102. Threonine 108 carries the post-translational modification Phosphothreonine. Phosphoserine is present on residues serine 124 and serine 131. 2 positions are modified to phosphothreonine: threonine 134 and threonine 137. Serine 138 carries the post-translational modification Phosphoserine.

The protein belongs to the globin family. As to quaternary structure, heterotetramer of two alpha chains and two beta chains. As to expression, red blood cells.

Functionally, involved in oxygen transport from the lung to the various peripheral tissues. Its function is as follows. Hemopressin acts as an antagonist peptide of the cannabinoid receptor CNR1. Hemopressin-binding efficiently blocks cannabinoid receptor CNR1 and subsequent signaling. This Ondatra zibethicus (Muskrat) protein is Hemoglobin subunit alpha (HBA).